The primary structure comprises 152 residues: Transcriptional regulator MraZ (152 aa).

2 consecutive SpoVT-AbrB domains span residues Val-5 to Glu-52 and Ala-81 to Gln-124.

This sequence belongs to the MraZ family. As to quaternary structure, forms oligomers.

The protein localises to the cytoplasm. The protein resides in the nucleoid. In Actinobacillus pleuropneumoniae serotype 5b (strain L20), this protein is Transcriptional regulator MraZ.